The following is a 227-amino-acid chain: Small ribosomal subunit protein uS3 (227 aa).

The region spanning I39 to D109 is the KH type-2 domain.

This sequence belongs to the universal ribosomal protein uS3 family. In terms of assembly, part of the 30S ribosomal subunit. Forms a tight complex with proteins S10 and S14.

Binds the lower part of the 30S subunit head. Binds mRNA in the 70S ribosome, positioning it for translation. In Mesomycoplasma hyopneumoniae (strain 232) (Mycoplasma hyopneumoniae), this protein is Small ribosomal subunit protein uS3.